Here is a 308-residue protein sequence, read N- to C-terminus: UPF0026 protein jhp_0109 (308 aa).

Positions 18–247 (FGKSLGVDLS…VSLPKRSTAQ (230 aa)) constitute a Radical SAM core domain. Residues Cys-33, Cys-37, and Cys-40 each contribute to the [4Fe-4S] cluster site.

It belongs to the UPF0026 family. It depends on [4Fe-4S] cluster as a cofactor.

The polypeptide is UPF0026 protein jhp_0109 (Helicobacter pylori (strain J99 / ATCC 700824) (Campylobacter pylori J99)).